The chain runs to 250 residues: Anamorsin homolog 2 (250 aa).

The interval 1 to 102 (MNLKITINQQ…QTKKINIPQQ (102 aa)) is N-terminal SAM-like domain. A linker region spans residues 102–149 (QDFNNCYGKYDYIEQKFQNQINFFKQVDLKGNQETIDENELLNDGVEV). [2Fe-2S] cluster is bound by residues C155, C162, C165, and C167. The interval 155–167 (CASKPRACANCTC) is fe-S binding site A. The [4Fe-4S] cluster site is built by C193, C196, C204, and C207. 2 consecutive short sequence motifs (cx2C motif) follow at residues 193-196 (CGSC) and 204-207 (CANC). Positions 193-207 (CGSCYLGDAFRCANC) are fe-S binding site B.

This sequence belongs to the anamorsin family. As to quaternary structure, monomer. [2Fe-2S] cluster is required as a cofactor. The cofactor is [4Fe-4S] cluster.

It is found in the cytoplasm. The protein resides in the mitochondrion intermembrane space. Functionally, component of the cytosolic iron-sulfur (Fe-S) protein assembly (CIA) machinery. Required for the maturation of extramitochondrial Fe-S proteins. Part of an electron transfer chain functioning in an early step of cytosolic Fe-S biogenesis, facilitating the de novo assembly of a [4Fe-4S] cluster on the cytosolic Fe-S scaffold complex. Electrons are transferred from NADPH via a FAD- and FMN-containing diflavin oxidoreductase. Together with the diflavin oxidoreductase, also required for the assembly of the diferric tyrosyl radical cofactor of ribonucleotide reductase (RNR), probably by providing electrons for reduction during radical cofactor maturation in the catalytic small subunit. This Paramecium tetraurelia protein is Anamorsin homolog 2.